Consider the following 451-residue polypeptide: 2-succinylbenzoate--CoA ligase (451 aa).

It belongs to the ATP-dependent AMP-binding enzyme family. MenE subfamily.

It catalyses the reaction 2-succinylbenzoate + ATP + CoA = 2-succinylbenzoyl-CoA + AMP + diphosphate. The protein operates within quinol/quinone metabolism; 1,4-dihydroxy-2-naphthoate biosynthesis; 1,4-dihydroxy-2-naphthoate from chorismate: step 5/7. It participates in quinol/quinone metabolism; menaquinone biosynthesis. In terms of biological role, converts 2-succinylbenzoate (OSB) to 2-succinylbenzoyl-CoA (OSB-CoA). This Lactococcus lactis subsp. lactis (strain IL1403) (Streptococcus lactis) protein is 2-succinylbenzoate--CoA ligase.